A 460-amino-acid chain; its full sequence is Armadillo repeat-containing protein LFR (460 aa).

The interval 1 to 30 (MQKRELGKSGGNSGGSSGPPAKRGRPFGST) is disordered. Over residues 8-17 (KSGGNSGGSS) the composition is skewed to gly residues. ARM repeat units follow at residues 227–269 (DNEV…NLAH), 323–362 (NEPF…NLVE), and 366–407 (DCRL…NLVS).

In terms of assembly, interacts with AS2. Expressed in roots, leaves, stems and flowers.

The protein localises to the nucleus. In terms of biological role, involved in leaf and flower development. Plays roles in leaf development partly by associating with AS2 and repressing KNAT1/BP transcription. Required for the formation of anther cell layers and normal expression of genes that regulates anther development. The polypeptide is Armadillo repeat-containing protein LFR (Arabidopsis thaliana (Mouse-ear cress)).